A 291-amino-acid chain; its full sequence is MAESGTLPTGFGELEVLAVGTVLLVEALSGLSLNILTILSFCKTPELRTPSHLLVLSLALADSGISLNALVAATSSLLRRWPYGSEGCQAHGFQGFVTALASICSSAAVAWGRYHHFCTRSRLDWNTAVSLVFFVWLSSAFWAALPLLGWGHYDYEPLGTCCTLDYSRGDRNFTSFLFTMAFFNFLLPLFITVVSYRLMEQKLGKTSRPPVNTVLPARTLLLGWGPYALLYLYATIADATSISPKLQMVPALIAKAVPTVNAMNYALGSEMVHRGIWQCLSPQRREHSREQ.

Residues 1-15 (MAESGTLPTGFGELE) lie on the Extracellular side of the membrane. A helical transmembrane segment spans residues 16–36 (VLAVGTVLLVEALSGLSLNIL). Over 37-52 (TILSFCKTPELRTPSH) the chain is Cytoplasmic. The chain crosses the membrane as a helical span at residues 53 to 73 (LLVLSLALADSGISLNALVAA). The Extracellular segment spans residues 74–91 (TSSLLRRWPYGSEGCQAH). A disulfide bridge links Cys88 with Cys162. A helical membrane pass occupies residues 92 to 112 (GFQGFVTALASICSSAAVAWG). The Cytoplasmic portion of the chain corresponds to 113-130 (RYHHFCTRSRLDWNTAVS). A helical membrane pass occupies residues 131–151 (LVFFVWLSSAFWAALPLLGWG). The Extracellular segment spans residues 152 to 175 (HYDYEPLGTCCTLDYSRGDRNFTS). Residue Asn172 is glycosylated (N-linked (GlcNAc...) asparagine). A helical membrane pass occupies residues 176–196 (FLFTMAFFNFLLPLFITVVSY). Residues 197–219 (RLMEQKLGKTSRPPVNTVLPART) are Cytoplasmic-facing. A helical transmembrane segment spans residues 220-240 (LLLGWGPYALLYLYATIADAT). Residues 241–247 (SISPKLQ) are Extracellular-facing. The helical transmembrane segment at 248–268 (MVPALIAKAVPTVNAMNYALG) threads the bilayer. The residue at position 255 (Lys255) is an N6-(retinylidene)lysine. Residues 269-291 (SEMVHRGIWQCLSPQRREHSREQ) lie on the Cytoplasmic side of the membrane.

This sequence belongs to the G-protein coupled receptor 1 family. Opsin subfamily. Covalently binds all-trans- and 11-cis-retinal. As to expression, preferentially expressed at high levels in the retinal pigment epithelium (RPE) and Mueller cells of the neural retina.

The protein resides in the membrane. Functionally, receptor for all-trans- and 11-cis-retinal. Binds preferentially to the former and may catalyze the isomerization of the chromophore by a retinochrome-like mechanism. The sequence is that of RPE-retinal G protein-coupled receptor (RGR) from Bos taurus (Bovine).